The sequence spans 338 residues: DNA-directed RNA polymerase subunit alpha (338 aa).

Residues 1–226 (MLIAQRPTLT…ELFGLTRELN (226 aa)) are alpha N-terminal domain (alpha-NTD). The alpha C-terminal domain (alpha-CTD) stretch occupies residues 243–338 (YAESLGTPVE…DDDYAETEQY (96 aa)). Residues 319–338 (AAAEAYDEANDDDYAETEQY) are disordered. Over residues 323–338 (AYDEANDDDYAETEQY) the composition is skewed to acidic residues.

The protein belongs to the RNA polymerase alpha chain family. In terms of assembly, homodimer. The RNAP catalytic core consists of 2 alpha, 1 beta, 1 beta' and 1 omega subunit. When a sigma factor is associated with the core the holoenzyme is formed, which can initiate transcription.

The enzyme catalyses RNA(n) + a ribonucleoside 5'-triphosphate = RNA(n+1) + diphosphate. Functionally, DNA-dependent RNA polymerase catalyzes the transcription of DNA into RNA using the four ribonucleoside triphosphates as substrates. The polypeptide is DNA-directed RNA polymerase subunit alpha (Cutibacterium acnes (strain DSM 16379 / KPA171202) (Propionibacterium acnes)).